Here is a 608-residue protein sequence, read N- to C-terminus: Putative pentatricopeptide repeat-containing protein At1g16830 (608 aa).

13 PPR repeats span residues 107–141 (KPRVFLLLLEIFWRGHIYDKAIEVYTGMSSFGFVP), 142–172 (NTRAMNMMMDVNFKLNVVNGALEIFEGIRFR), 173–210 (NFFSFDIALSHFCSRGGRGDLVGVKIVLKRMIGEGFYP), 211–245 (NRERFGQILRLCCRTGCVSEAFQVVGLMICSGISV), 246–280 (SVNVWSMLVSGFFRSGEPQKAVDLFNKMIQIGCSP), 281–315 (NLVTYTSLIKGFVDLGMVDEAFTVLSKVQSEGLAP), 316–350 (DIVLCNLMIHTYTRLGRFEEARKVFTSLEKRKLVP), 351–381 (DQYTFASILSSLCLSGKFDLVPRITHGIGTD), 383–417 (DLVTGNLLSNCFSKIGYNSYALKVLSIMSYKDFAL), 418–452 (DCYTYTVYLSALCRGGAPRAAIKMYKIIIKEKKHL), 453–487 (DAHFHSAIIDSLIELGKYNTAVHLFKRCILEKYPL), 488–522 (DVVSYTVAIKGLVRAKRIEEAYSLCCDMKEGGIYP), and 523–557 (NRRTYRTIISGLCKEKETEKVRKILRECIQEGVEL).

The protein belongs to the PPR family. P subfamily.

This Arabidopsis thaliana (Mouse-ear cress) protein is Putative pentatricopeptide repeat-containing protein At1g16830.